A 135-amino-acid chain; its full sequence is Cofilin-4 (135 aa).

The ADF-H domain occupies 3–135; it reads SCASINDEVI…SQSLVEERCK (133 aa).

The protein belongs to the actin-binding proteins ADF family.

It is found in the cytoplasm. Its subcellular location is the cytoskeleton. Controls actin polymerization and depolymerization. The chain is Cofilin-4 (cofE) from Dictyostelium discoideum (Social amoeba).